We begin with the raw amino-acid sequence, 265 residues long: Tryptophan 2,3-dioxygenase (265 aa).

Residues 38 to 42 and R104 contribute to the substrate site; that span reads FIVVH. H223 contacts heme. T237 is a substrate binding site.

It belongs to the tryptophan 2,3-dioxygenase family. Homotetramer. Heme is required as a cofactor.

It carries out the reaction L-tryptophan + O2 = N-formyl-L-kynurenine. Its pathway is amino-acid degradation; L-tryptophan degradation via kynurenine pathway; L-kynurenine from L-tryptophan: step 1/2. Heme-dependent dioxygenase that catalyzes the oxidative cleavage of the L-tryptophan (L-Trp) pyrrole ring and converts L-tryptophan to N-formyl-L-kynurenine. Catalyzes the oxidative cleavage of the indole moiety. The chain is Tryptophan 2,3-dioxygenase from Anaeromyxobacter dehalogenans (strain 2CP-C).